The following is a 225-amino-acid chain: MNARPLSELVDDGWAAALAPVESQVAQMGEFLRAELAAGHRYLPAGPNILRAFTFPLEKVRVLIVGQDPYPTPGHAVGLSFSVAPDVRPLPRSLDNIFKEYRADLGHPAPSNGDLTPWCEQGVMLLNRVLTVRPGTPASHRGKGWEAVTECAIRALVARRQPMVAVLWGRDASTLKPMLEDTAVIESPHPSPLSASRGFFGSKPFSRANELLAQRGAEPVDWRLP.

Residue Asp68 is the Proton acceptor of the active site.

It belongs to the uracil-DNA glycosylase (UDG) superfamily. UNG family.

It localises to the cytoplasm. The catalysed reaction is Hydrolyzes single-stranded DNA or mismatched double-stranded DNA and polynucleotides, releasing free uracil.. Excises uracil residues from the DNA which can arise as a result of misincorporation of dUMP residues by DNA polymerase or due to deamination of cytosine. This chain is Uracil-DNA glycosylase, found in Mycolicibacterium gilvum (strain PYR-GCK) (Mycobacterium gilvum (strain PYR-GCK)).